Reading from the N-terminus, the 187-residue chain is Small ribosomal subunit protein uS4 (187 aa).

An S4 RNA-binding domain is found at 105-174 (RRLQTLVFRK…DNHPERAKIV (70 aa)).

The protein belongs to the universal ribosomal protein uS4 family. Part of the 30S ribosomal subunit. Contacts protein S5. The interaction surface between S4 and S5 is involved in control of translational fidelity.

In terms of biological role, one of the primary rRNA binding proteins, it binds directly to 16S rRNA where it nucleates assembly of the body of the 30S subunit. Functionally, with S5 and S12 plays an important role in translational accuracy. This is Small ribosomal subunit protein uS4 from Methanocaldococcus jannaschii (strain ATCC 43067 / DSM 2661 / JAL-1 / JCM 10045 / NBRC 100440) (Methanococcus jannaschii).